The chain runs to 748 residues: Peptidyl serine alpha-galactosyltransferase (748 aa).

The first 26 residues, 1–26, serve as a signal peptide directing secretion; that stretch reads MVAVFHGPLVLGALLLLLALQHGASA. Over 27–710 the chain is Extracellular; it reads EEPGFANRTG…GPSLHSLLGR (684 aa). 3 N-linked (GlcNAc...) asparagine glycosylation sites follow: N33, N184, and N297. A ShKT domain is found at 415 to 449; that stretch reads CQDFHPKCEEWKESGECTKNENYMTENCRKTCDKC. 3 cysteine pairs are disulfide-bonded: C415/C449, C422/C442, and C431/C446. Disordered regions lie at residues 474 to 576 and 611 to 670; these read ELQP…ADPK and EVPK…KKNI. The segment covering 531–565 has biased composition (pro residues); sequence SPPPSPPPASPPPVDSPPPMSPPPESPSPDKPPPK. Basic and acidic residues predominate over residues 611–637; that stretch reads EVPKRTKATDEEEEAPKAKHAESHLTL. A helical membrane pass occupies residues 711–731; the sequence is LNTWQALVLWLVVVVAFLALV. Residues 732–748 lie on the Cytoplasmic side of the membrane; sequence PRIAKLRRRQRSGMRTE.

Mn(2+) serves as cofactor.

Its subcellular location is the membrane. In terms of biological role, glycosyltransferase involved in the O-galactosylation of several proteins including extensins. Catalyzes the transfer of alpha-galactosyl to Ser residues. Hydroxylation of proline residues adjacent to the serine acceptor is required for activity. Utilizes selectively UDP-galactose as a donor nucleotide sugar. This chain is Peptidyl serine alpha-galactosyltransferase, found in Chlamydomonas reinhardtii (Chlamydomonas smithii).